Consider the following 179-residue polypeptide: Sec-independent protein translocase protein TatB (179 aa).

The helical transmembrane segment at phenylalanine 2 to glycine 22 threads the bilayer. Residues leucine 98–leucine 109 show a composition bias toward low complexity. Residues leucine 98–threonine 179 are disordered.

Belongs to the TatB family. In terms of assembly, the Tat system comprises two distinct complexes: a TatABC complex, containing multiple copies of TatA, TatB and TatC subunits, and a separate TatA complex, containing only TatA subunits. Substrates initially bind to the TatABC complex, which probably triggers association of the separate TatA complex to form the active translocon.

It is found in the cell membrane. Functionally, part of the twin-arginine translocation (Tat) system that transports large folded proteins containing a characteristic twin-arginine motif in their signal peptide across membranes. Together with TatC, TatB is part of a receptor directly interacting with Tat signal peptides. TatB may form an oligomeric binding site that transiently accommodates folded Tat precursor proteins before their translocation. This chain is Sec-independent protein translocase protein TatB, found in Frankia casuarinae (strain DSM 45818 / CECT 9043 / HFP020203 / CcI3).